We begin with the raw amino-acid sequence, 499 residues long: GTPase Der (499 aa).

2 consecutive EngA-type G domains span residues 3–166 (PVVA…MDEV) and 211–384 (IKLA…DCST). GTP-binding positions include 9–16 (GRPNVGKS), 56–60 (DTGGI), 118–121 (NKTD), 217–224 (GRPNVGKS), 264–268 (DTAGV), and 329–332 (NKWD). The KH-like domain maps to 385 to 469 (RRVNTSMLTR…PIRIQFKEGD (85 aa)).

The protein belongs to the TRAFAC class TrmE-Era-EngA-EngB-Septin-like GTPase superfamily. EngA (Der) GTPase family. Associates with the 50S ribosomal subunit.

Functionally, GTPase that plays an essential role in the late steps of ribosome biogenesis. This chain is GTPase Der, found in Erwinia tasmaniensis (strain DSM 17950 / CFBP 7177 / CIP 109463 / NCPPB 4357 / Et1/99).